A 309-amino-acid chain; its full sequence is Tyrosine recombinase XerD (309 aa).

In terms of domain architecture, Core-binding (CB) spans 3-88 (MRASLAIENF…ALRQFFRFLY (86 aa)). Positions 109–302 (PLPKIMSVEN…LEERLHKLVS (194 aa)) constitute a Tyr recombinase domain. Catalysis depends on residues Arg-158, Lys-182, His-254, Arg-257, and His-280. Tyr-289 functions as the O-(3'-phospho-DNA)-tyrosine intermediate in the catalytic mechanism.

This sequence belongs to the 'phage' integrase family. XerD subfamily. In terms of assembly, forms a cyclic heterotetrameric complex composed of two molecules of XerC and two molecules of XerD.

The protein localises to the cytoplasm. In terms of biological role, site-specific tyrosine recombinase, which acts by catalyzing the cutting and rejoining of the recombining DNA molecules. The XerC-XerD complex is essential to convert dimers of the bacterial chromosome into monomers to permit their segregation at cell division. It also contributes to the segregational stability of plasmids. The sequence is that of Tyrosine recombinase XerD from Brucella suis biovar 1 (strain 1330).